The primary structure comprises 485 residues: Aspartyl/glutamyl-tRNA(Asn/Gln) amidotransferase subunit B (485 aa).

This sequence belongs to the GatB/GatE family. GatB subfamily. In terms of assembly, heterotrimer of A, B and C subunits.

It carries out the reaction L-glutamyl-tRNA(Gln) + L-glutamine + ATP + H2O = L-glutaminyl-tRNA(Gln) + L-glutamate + ADP + phosphate + H(+). The catalysed reaction is L-aspartyl-tRNA(Asn) + L-glutamine + ATP + H2O = L-asparaginyl-tRNA(Asn) + L-glutamate + ADP + phosphate + 2 H(+). In terms of biological role, allows the formation of correctly charged Asn-tRNA(Asn) or Gln-tRNA(Gln) through the transamidation of misacylated Asp-tRNA(Asn) or Glu-tRNA(Gln) in organisms which lack either or both of asparaginyl-tRNA or glutaminyl-tRNA synthetases. The reaction takes place in the presence of glutamine and ATP through an activated phospho-Asp-tRNA(Asn) or phospho-Glu-tRNA(Gln). In Cupriavidus pinatubonensis (strain JMP 134 / LMG 1197) (Cupriavidus necator (strain JMP 134)), this protein is Aspartyl/glutamyl-tRNA(Asn/Gln) amidotransferase subunit B.